The chain runs to 286 residues: Phycobilisome 32.1 kDa linker polypeptide, phycocyanin-associated, rod (286 aa).

The PBS-linker domain maps to alanine 2–arginine 180. The CpcD-like domain occupies aspartate 234–alanine 286.

The protein belongs to the phycobilisome linker protein family.

The protein localises to the cellular thylakoid membrane. In terms of biological role, rod linker protein, associated with phycocyanin. Linker polypeptides determine the state of aggregation and the location of the disk-shaped phycobiliprotein units within the phycobilisome and modulate their spectroscopic properties in order to mediate a directed and optimal energy transfer. In Mastigocladus laminosus (Fischerella sp.), this protein is Phycobilisome 32.1 kDa linker polypeptide, phycocyanin-associated, rod (cpcC).